The chain runs to 118 residues: Large ribosomal subunit protein bL19 (118 aa).

It belongs to the bacterial ribosomal protein bL19 family.

Its function is as follows. This protein is located at the 30S-50S ribosomal subunit interface and may play a role in the structure and function of the aminoacyl-tRNA binding site. The polypeptide is Large ribosomal subunit protein bL19 (Ligilactobacillus salivarius (strain UCC118) (Lactobacillus salivarius)).